A 71-amino-acid polypeptide reads, in one-letter code: Conotoxin Bu24 (71 aa).

The first 21 residues, 1-21, serve as a signal peptide directing secretion; the sequence is MGMRMMVTVFLLVVLATTVVS. Positions 22–44 are excised as a propeptide; sequence LRSNRASDGRRGIVNKLNDLVPK. At Asn70 the chain carries Asparagine amide.

This sequence belongs to the conotoxin A superfamily. Post-translationally, contains 3 disulfide bonds. They are not indicated here, since framework IV presents two different connectivities (I-V, II-III, IV-VI and I-III, II-V, IV-VI). As to expression, expressed by the venom duct.

Its subcellular location is the secreted. The sequence is that of Conotoxin Bu24 from Conus bullatus (Bubble cone).